The primary structure comprises 347 residues: Ferrochelatase (347 aa).

Positions 193 and 273 each coordinate Fe cation.

This sequence belongs to the ferrochelatase family.

The protein localises to the cytoplasm. The catalysed reaction is heme b + 2 H(+) = protoporphyrin IX + Fe(2+). It participates in porphyrin-containing compound metabolism; protoheme biosynthesis; protoheme from protoporphyrin-IX: step 1/1. In terms of biological role, catalyzes the ferrous insertion into protoporphyrin IX. This Rickettsia canadensis (strain McKiel) protein is Ferrochelatase.